The primary structure comprises 372 residues: Protein-glutamate methylesterase/protein-glutamine glutaminase (372 aa).

In terms of domain architecture, Response regulatory spans 5–123 (RVLIVDDSAL…SANLTTVSET (119 aa)). Aspartate 56 carries the post-translational modification 4-aspartylphosphate. Over residues 140 to 151 (GTRSTDTTNSFS) the composition is skewed to polar residues. The interval 140 to 177 (GTRSTDTTNSFSEPFKSTIPKPMTAAEPQKEEKPTPQR) is disordered. A compositionally biased stretch (basic and acidic residues) spans 167–177 (PQKEEKPTPQR). The region spanning 178 to 364 (EHGNIQIIAI…VSLDNMAAAI (187 aa)) is the CheB-type methylesterase domain. Catalysis depends on residues serine 190, histidine 217, and aspartate 313.

This sequence belongs to the CheB family. Phosphorylated by CheA. Phosphorylation of the N-terminal regulatory domain activates the methylesterase activity.

The protein resides in the cytoplasm. It catalyses the reaction [protein]-L-glutamate 5-O-methyl ester + H2O = L-glutamyl-[protein] + methanol + H(+). It carries out the reaction L-glutaminyl-[protein] + H2O = L-glutamyl-[protein] + NH4(+). In terms of biological role, involved in chemotaxis. Part of a chemotaxis signal transduction system that modulates chemotaxis in response to various stimuli. Catalyzes the demethylation of specific methylglutamate residues introduced into the chemoreceptors (methyl-accepting chemotaxis proteins or MCP) by CheR. Also mediates the irreversible deamidation of specific glutamine residues to glutamic acid. In Treponema denticola (strain ATCC 35405 / DSM 14222 / CIP 103919 / JCM 8153 / KCTC 15104), this protein is Protein-glutamate methylesterase/protein-glutamine glutaminase.